Reading from the N-terminus, the 269-residue chain is Glutamate racemase (269 aa).

Substrate contacts are provided by residues 11–12 (DS) and 43–44 (YG). The Proton donor/acceptor role is filled by Cys-74. Position 75–76 (75–76 (NT)) interacts with substrate. The Proton donor/acceptor role is filled by Cys-185. A substrate-binding site is contributed by 186–187 (TH).

This sequence belongs to the aspartate/glutamate racemases family.

The enzyme catalyses L-glutamate = D-glutamate. It functions in the pathway cell wall biogenesis; peptidoglycan biosynthesis. In terms of biological role, provides the (R)-glutamate required for cell wall biosynthesis. This chain is Glutamate racemase, found in Bacillus cereus (strain ATCC 10987 / NRS 248).